The following is a 75-amino-acid chain: Small ribosomal subunit protein bS18 (75 aa).

It belongs to the bacterial ribosomal protein bS18 family. In terms of assembly, part of the 30S ribosomal subunit. Forms a tight heterodimer with protein bS6.

Binds as a heterodimer with protein bS6 to the central domain of the 16S rRNA, where it helps stabilize the platform of the 30S subunit. The sequence is that of Small ribosomal subunit protein bS18 from Shewanella amazonensis (strain ATCC BAA-1098 / SB2B).